The sequence spans 416 residues: Phosphatidylinositol 5-phosphate 4-kinase type-2 beta (416 aa).

An N-acetylserine modification is found at Ser-2. Thr-8 is modified (phosphothreonine). A Phosphoserine modification is found at Ser-19. The PIPK domain occupies 38–415; it reads ASEPILSVLM…RFNEFMSNIL (378 aa). The tract at residues 64-70 is required for interaction with PIP5K1A; the sequence is VMLMPDD. Residues Lys-94 and Lys-150 each carry the N6-acetyllysine modification. ATP-binding positions include 202-204 and Lys-214; that span reads RNV. Residues 203–204 and Lys-214 each bind GTP; that span reads NV. A Phosphothreonine modification is found at Thr-322. A Phosphoserine modification is found at Ser-326. Asp-369 contacts GTP.

As to quaternary structure, homodimer. Binds TNFRSF1A. Interacts with PIP4K2A; the interaction suppresses ubiquitination by the SPOP/CUL3 complex. Probably interacts with PIP5K1A; the interaction inhibits PIP5K1A kinase activity. In terms of processing, ubiquitinated by the SPOP/CUL3 complex. Ubiquitination is stimulated by PtdIns5P levels. Post-translationally, phosphorylated on serine residues.

The protein localises to the endoplasmic reticulum membrane. The protein resides in the cell membrane. It is found in the nucleus. Its subcellular location is the cytoplasm. The enzyme catalyses a 1,2-diacyl-sn-glycero-3-phospho-(1D-myo-inositol-5-phosphate) + ATP = a 1,2-diacyl-sn-glycero-3-phospho-(1D-myo-inositol-4,5-bisphosphate) + ADP + H(+). It carries out the reaction 1,2-dihexadecanoyl-sn-glycero-3-phospho-(1D-myo-inositol-5-phosphate) + ATP = 1,2-dihexadecanoyl-sn-glycero-3-phospho-(1D-myo-inositol-4,5-bisphosphate) + ADP + H(+). It catalyses the reaction 1,2-dihexadecanoyl-sn-glycero-3-phospho-(1D-myo-inositol-5-phosphate) + GTP = 1,2-dihexadecanoyl-sn-glycero-3-phospho-(1D-myo-inositol-4,5-bisphosphate) + GDP + H(+). Participates in the biosynthesis of phosphatidylinositol 4,5-bisphosphate. Preferentially utilizes GTP, rather than ATP, for PI(5)P phosphorylation and its activity reflects changes in direct proportion to the physiological GTP concentration. Its GTP-sensing activity is critical for metabolic adaptation. PIP4Ks negatively regulate insulin signaling through a catalytic-independent mechanism. They interact with PIP5Ks and suppress PIP5K-mediated PtdIns(4,5)P2 synthesis and insulin-dependent conversion to PtdIns(3,4,5)P3. The protein is Phosphatidylinositol 5-phosphate 4-kinase type-2 beta of Rattus norvegicus (Rat).